Reading from the N-terminus, the 239-residue chain is Probable 2-phosphosulfolactate phosphatase (239 aa).

Belongs to the ComB family. Mg(2+) is required as a cofactor.

It catalyses the reaction (2R)-O-phospho-3-sulfolactate + H2O = (2R)-3-sulfolactate + phosphate. The protein is Probable 2-phosphosulfolactate phosphatase of Clostridium botulinum (strain Kyoto / Type A2).